The chain runs to 95 residues: UPF0235 protein MS0322 (95 aa).

It belongs to the UPF0235 family.

In Mannheimia succiniciproducens (strain KCTC 0769BP / MBEL55E), this protein is UPF0235 protein MS0322.